The sequence spans 107 residues: UPF0145 protein Spro_1658 (107 aa).

This sequence belongs to the UPF0145 family.

The polypeptide is UPF0145 protein Spro_1658 (Serratia proteamaculans (strain 568)).